A 167-amino-acid chain; its full sequence is SsrA-binding protein (167 aa).

This sequence belongs to the SmpB family.

It is found in the cytoplasm. Its function is as follows. Required for rescue of stalled ribosomes mediated by trans-translation. Binds to transfer-messenger RNA (tmRNA), required for stable association of tmRNA with ribosomes. tmRNA and SmpB together mimic tRNA shape, replacing the anticodon stem-loop with SmpB. tmRNA is encoded by the ssrA gene; the 2 termini fold to resemble tRNA(Ala) and it encodes a 'tag peptide', a short internal open reading frame. During trans-translation Ala-aminoacylated tmRNA acts like a tRNA, entering the A-site of stalled ribosomes, displacing the stalled mRNA. The ribosome then switches to translate the ORF on the tmRNA; the nascent peptide is terminated with the 'tag peptide' encoded by the tmRNA and targeted for degradation. The ribosome is freed to recommence translation, which seems to be the essential function of trans-translation. The polypeptide is SsrA-binding protein (Stenotrophomonas maltophilia (strain R551-3)).